The chain runs to 178 residues: MVARRKGERVVRKNEVENVQQRACANRRERQRTKELNDAFTLLRKLIPSMPSDKMSKIHTLRIATDYISFLDEMQKNGCKLYGHSIFDEKRGYNLQSAFNMWRGNNGYTPIAGPSQLPPLQSAHIPPPAPSSIPPHCLMPQPWYQTCPPPKQEFHELCPISTPNPNSNPNQLTPIHWQ.

The bHLH domain occupies 20 to 71 (QQRACANRRERQRTKELNDAFTLLRKLIPSMPSDKMSKIHTLRIATDYISFL).

In terms of assembly, efficient DNA binding requires dimerization with another bHLH protein. Homodimer. Forms a heterodimer with hlh-2. As to expression, expressed in defecation-associated muscles and neuron-like cells in the head at the L1 stage. In later larvae, expressed in SM cells and their descendants. Not expressed in differentiated body wall or sex muscles.

Its subcellular location is the nucleus. Its function is as follows. Acts as a transcriptional regulator. Involved in postembryonic mesodermal cell fate specification. Activates ceh-24 and egl-15 during mesodermal patterning. The polypeptide is Twist-related protein (hlh-8) (Caenorhabditis elegans).